A 352-amino-acid chain; its full sequence is Pejvakin (352 aa).

The protein belongs to the gasdermin family. In terms of assembly, interacts with MAP1LC3B; interaction is direct. Interacts with IQGAP1. Interacts with ROCK2. Interacts with TRIOBP. In ear, it is detected in the organ of Corti and the spiral ganglion within the cochlea in the sensory areas of the vestibule (cristae ampullares of the semicircular ducts, and maculae of the saccule and utricle) and in the first 3 relays (cochlear nuclei, superior olivary complex and inferior colliculus) of the afferent auditory pathway. Detected in hair cells of the cochlea and vestibule but not in neurons. In the afferent auditory pathway, it is present in the cell bodies of neurons but not in fiber bundles such as the trapezoid body in the brainstem. Also detected in spiral ganglion cells, which form the auditory nerve and project to the cochlear nuclei in the brainstem. Also present in the cochlear nuclei, the superior olive and the inferior colliculus (at protein level). Expressed in all the adult organs tested: brain, eye, inner ear, heart, lung, kidney, liver, intestine, testis and weakly in skeletal muscle.

The protein resides in the peroxisome membrane. It is found in the cell projection. Its subcellular location is the cilium. In terms of biological role, peroxisome-associated protein required to protect auditory hair cells against noise-induced damage. Acts by regulating noise-induced peroxisome proliferation in auditory hair cells and neurons, and promoting autophagic degradation of damaged peroxisomes (pexophagy). Noise overexposure increases reactive oxygen species (ROS) levels, causing oxidative damage to auditory hair cells and resulting in hearing loss. PJVK acts as a ROS sensor that recruits the autophagy machinery to trigger pexophagy of peroxisomes damaged by oxidative stress. In addition to pexophagy, also required to promote peroxisome proliferation in response to sound overstimulation. In Mus musculus (Mouse), this protein is Pejvakin.